The primary structure comprises 880 residues: Probable dipeptidyl-aminopeptidase B (880 aa).

Basic and acidic residues predominate over residues Met-1–Glu-26. Residues Met-1 to Gln-71 are disordered. The Cytoplasmic portion of the chain corresponds to Met-1–Arg-93. Residues Asp-30–Ser-40 show a composition bias toward low complexity. A helical; Signal-anchor for type II membrane protein transmembrane segment spans residues Trp-94–Leu-114. The Vacuolar portion of the chain corresponds to Met-115–Arg-880. N-linked (GlcNAc...) asparagine glycosylation is present at Asn-533. Ser-724 functions as the Charge relay system in the catalytic mechanism. Asn-778 carries an N-linked (GlcNAc...) asparagine glycan. Active-site charge relay system residues include Asp-801 and His-834.

Belongs to the peptidase S9B family.

It localises to the vacuole membrane. The enzyme catalyses Release of an N-terminal dipeptide, Xaa-Yaa-|-Zaa-, from a polypeptide, preferentially when Yaa is Pro, provided Zaa is neither Pro nor hydroxyproline.. Type IV dipeptidyl-peptidase which removes N-terminal dipeptides sequentially from polypeptides having unsubstituted N-termini provided that the penultimate residue is proline. The chain is Probable dipeptidyl-aminopeptidase B (dapB) from Pyrenophora tritici-repentis (strain Pt-1C-BFP) (Wheat tan spot fungus).